The primary structure comprises 225 residues: Ribosomal RNA large subunit methyltransferase E (225 aa).

S-adenosyl-L-methionine contacts are provided by Gly76, Trp78, Asp99, Asp115, and Asp139. The active-site Proton acceptor is the Lys179.

It belongs to the class I-like SAM-binding methyltransferase superfamily. RNA methyltransferase RlmE family.

The protein localises to the cytoplasm. The enzyme catalyses uridine(2552) in 23S rRNA + S-adenosyl-L-methionine = 2'-O-methyluridine(2552) in 23S rRNA + S-adenosyl-L-homocysteine + H(+). In terms of biological role, specifically methylates the uridine in position 2552 of 23S rRNA at the 2'-O position of the ribose in the fully assembled 50S ribosomal subunit. The chain is Ribosomal RNA large subunit methyltransferase E from Afipia carboxidovorans (strain ATCC 49405 / DSM 1227 / KCTC 32145 / OM5) (Oligotropha carboxidovorans).